Here is a 768-residue protein sequence, read N- to C-terminus: Putative calcium up-regulated protein H (768 aa).

Positions 1–22 are disordered; that stretch reads MINIEDISKSSNQSEEKQLKST. Ricin B-type lectin domains lie at 25–145 and 116–248; these read KPKY…WTTF and QGNG…WGIN.

This sequence belongs to the cup family.

The protein localises to the cytoplasm. It localises to the membrane. Functionally, may play an important role in stabilizing and/or regulating the cell membrane during Ca(2+) stress or certain stages of development. The sequence is that of Putative calcium up-regulated protein H (cupH) from Dictyostelium discoideum (Social amoeba).